We begin with the raw amino-acid sequence, 396 residues long: MIISAASDYRAAAQRILPPFLFHYMDGGAYSEYTLRRNVEDLSEVALRQRILKNMSDLSLETTLFNEKLSMPVALGPVGLCGMYARRGEVQAAKAADAHGIPFTLSTVSVCPIEEVAPAIKRPMWFQLYVLRDRGFMRNALERAKAAGCSTLVFTVDMPTPGARYRDAHSGMSGPNAAMRRYLQAVTHPQWAWDVGLNGRPHDLGNISAYLGKPTGLEDYIGWLGNNFDPSISWKDLEWIRDFWDGPMVIKGILDPEDARDAVRFGADGIVVSNHGGRQLDGVLSSARALPAIADAVKGDIAILADSGIRNGLDVVRMIALGADTILLGRAFLYALATAGQAGVANLLNLIEKEMKVAMTLTGAKSISEITQDSLVQGLGKELPAALAPMAKGNAA.

In terms of domain architecture, FMN hydroxy acid dehydrogenase spans 1 to 380; sequence MIISAASDYR…TQDSLVQGLG (380 aa). Y24 contacts substrate. Residues S106 and Q127 each contribute to the FMN site. Y129 is a binding site for substrate. T155 provides a ligand contact to FMN. R164 lines the substrate pocket. K251 is an FMN binding site. Catalysis depends on H275, which acts as the Proton acceptor. Position 278 (R278) interacts with substrate. 306 to 330 lines the FMN pocket; the sequence is DSGIRNGLDVVRMIALGADTILLGR.

It belongs to the FMN-dependent alpha-hydroxy acid dehydrogenase family. FMN is required as a cofactor.

Its subcellular location is the cell inner membrane. It carries out the reaction (S)-lactate + A = pyruvate + AH2. Functionally, catalyzes the conversion of L-lactate to pyruvate. Is coupled to the respiratory chain. This is L-lactate dehydrogenase from Escherichia coli O81 (strain ED1a).